The chain runs to 459 residues: tRNA modification GTPase MnmE (459 aa).

Arginine 23, glutamate 88, and arginine 127 together coordinate (6S)-5-formyl-5,6,7,8-tetrahydrofolate. The TrmE-type G domain occupies 223 to 381 (GLSVVIVGKP…IKNCIKELFF (159 aa)). Residue asparagine 233 coordinates K(+). GTP contacts are provided by residues 233 to 238 (NVGKSS), 252 to 258 (TDIPGTT), and 277 to 280 (DTAG). Serine 237 is a Mg(2+) binding site. The K(+) site is built by threonine 252, isoleucine 254, and threonine 257. Threonine 258 is a Mg(2+) binding site. Lysine 459 serves as a coordination point for (6S)-5-formyl-5,6,7,8-tetrahydrofolate.

The protein belongs to the TRAFAC class TrmE-Era-EngA-EngB-Septin-like GTPase superfamily. TrmE GTPase family. As to quaternary structure, homodimer. Heterotetramer of two MnmE and two MnmG subunits. Requires K(+) as cofactor.

Its subcellular location is the cytoplasm. Its function is as follows. Exhibits a very high intrinsic GTPase hydrolysis rate. Involved in the addition of a carboxymethylaminomethyl (cmnm) group at the wobble position (U34) of certain tRNAs, forming tRNA-cmnm(5)s(2)U34. This is tRNA modification GTPase MnmE from Clostridium kluyveri (strain ATCC 8527 / DSM 555 / NBRC 12016 / NCIMB 10680 / K1).